Here is a 301-residue protein sequence, read N- to C-terminus: tRNA uridine(34) hydroxylase (301 aa).

The Rhodanese domain occupies 121–215 (RSDDVVLIDT…YLEEVPAENS (95 aa)). C175 serves as the catalytic Cysteine persulfide intermediate.

The protein belongs to the TrhO family.

It carries out the reaction uridine(34) in tRNA + AH2 + O2 = 5-hydroxyuridine(34) in tRNA + A + H2O. In terms of biological role, catalyzes oxygen-dependent 5-hydroxyuridine (ho5U) modification at position 34 in tRNAs. The protein is tRNA uridine(34) hydroxylase of Ruegeria pomeroyi (strain ATCC 700808 / DSM 15171 / DSS-3) (Silicibacter pomeroyi).